Consider the following 778-residue polypeptide: E3 UFM1-protein ligase 1 homolog (778 aa).

Residues 404-477 are disordered; sequence NNLSTSHDAD…TVQQSAGNTR (74 aa). Residues 445 to 457 show a composition bias toward basic residues; the sequence is KSTKKHQRGRAAA.

This sequence belongs to the UFL1 family.

Functionally, E3 UFM1-protein ligase that mediates ufmylation of target proteins. In Drosophila virilis (Fruit fly), this protein is E3 UFM1-protein ligase 1 homolog.